The chain runs to 348 residues: Phage-like element PBSX protein XkdT (348 aa).

This sequence belongs to the Mu gp47/PBSX XkdT family.

The chain is Phage-like element PBSX protein XkdT (xkdT) from Bacillus subtilis (strain 168).